The chain runs to 64 residues: Lantipeptide Flvbeta.d (64 aa).

A propeptide spans 1–31 (cleaved by FlvT); that stretch reads MDNNTEKFNELAAIADESELNEMLDENITGA. Positions 33-37 form a cross-link, lanthionine (Ser-Cys); by FlvM2; that stretch reads STIQC. 2 positions are modified to 2,3-didehydrobutyrine; by FlvM2: threonine 34 and threonine 41. 3 cross-links (beta-methyllanthionine (Thr-Cys); by FlvM2) span residues 44–52, 55–58, and 59–62; these read TILSVVFDC, TSAC, and TPPC. The lanthionine (Ser-Cys); by FlvM2 cross-link spans 47-53; the sequence is SVVFDCC.

Contains LL-lanthionine, DL-lanthionine, and DL-beta-methyllanthionine, when coepressed in E.coli with the flavecin synthetase FlvM2.

It is found in the secreted. In terms of biological role, lanthionine-containing peptide that does probably not show antibacterial activity, since its analog [+2]Flvbeta.d does not show antibacterial activity against M.luteus. Also does not show antibiotic activity when tested with [Del2]Flvalpha.a, an analog of Flvalpha.a, which is encoded by the same operon than Flvbeta.d. The bactericidal activity of lantibiotics is based on depolarization of energized bacterial cytoplasmic membranes, initiated by the formation of aqueous transmembrane pores. This is Lantipeptide Flvbeta.d from Ruminococcus flavefaciens.